The sequence spans 154 residues: CASP-like protein 5B3 (154 aa).

Over 1–17 (MKDVVGSPGTWSGMSLR) the chain is Cytoplasmic. The helical transmembrane segment at 18–38 (VSQCVFAGASVVAMASAYGFS) threads the bilayer. An N-linked (GlcNAc...) asparagine glycan is attached at Asn-39. At 39–42 (NYTA) the chain is on the extracellular side. Residues 43–63 (FCYLIASMGLQLLWSFGLACL) traverse the membrane as a helical segment. The Cytoplasmic segment spans residues 64 to 77 (DIYSLQTKRDLHNP). The helical transmembrane segment at 78–98 (VLVSLFVVGDWVTAILSFAAA) threads the bilayer. Residues 99–129 (SASAGVTILFERDVHFCRMYPQLSCGRYELS) lie on the Extracellular side of the membrane. The helical transmembrane segment at 130 to 150 (VILAFITWSFIATSAVSMFWL) threads the bilayer. The Cytoplasmic portion of the chain corresponds to 151-154 (LASL).

The protein belongs to the Casparian strip membrane proteins (CASP) family. As to quaternary structure, homodimer and heterodimers.

Its subcellular location is the cell membrane. In Oryza sativa subsp. indica (Rice), this protein is CASP-like protein 5B3.